Consider the following 740-residue polypeptide: Ion-translocating oxidoreductase complex subunit C (740 aa).

4Fe-4S ferredoxin-type domains are found at residues Gly-369–Tyr-397 and Lys-407–Phe-436. Residues Cys-377, Cys-380, Cys-383, Cys-387, Cys-416, Cys-419, Cys-422, and Cys-426 each coordinate [4Fe-4S] cluster. 2 disordered regions span residues Leu-571–Ala-590 and Lys-602–Lys-716. 2 stretches are compositionally biased toward low complexity: residues Gln-573 to Gln-583 and Gln-637 to Gln-647.

The protein belongs to the 4Fe4S bacterial-type ferredoxin family. RnfC subfamily. As to quaternary structure, the complex is composed of six subunits: RsxA, RsxB, RsxC, RsxD, RsxE and RsxG. [4Fe-4S] cluster is required as a cofactor.

The protein resides in the cell inner membrane. Part of a membrane-bound complex that couples electron transfer with translocation of ions across the membrane. Required to maintain the reduced state of SoxR. Probably transfers electron from NAD(P)H to SoxR. The sequence is that of Ion-translocating oxidoreductase complex subunit C from Escherichia coli (strain K12).